The primary structure comprises 282 residues: Phosphatidylserine decarboxylase proenzyme (282 aa).

Catalysis depends on charge relay system; for autoendoproteolytic cleavage activity residues Asp89, His145, and Ser249. The Schiff-base intermediate with substrate; via pyruvic acid; for decarboxylase activity role is filled by Ser249. A Pyruvic acid (Ser); by autocatalysis modification is found at Ser249.

This sequence belongs to the phosphatidylserine decarboxylase family. PSD-B subfamily. Prokaryotic type I sub-subfamily. As to quaternary structure, heterodimer of a large membrane-associated beta subunit and a small pyruvoyl-containing alpha subunit. The cofactor is pyruvate. Is synthesized initially as an inactive proenzyme. Formation of the active enzyme involves a self-maturation process in which the active site pyruvoyl group is generated from an internal serine residue via an autocatalytic post-translational modification. Two non-identical subunits are generated from the proenzyme in this reaction, and the pyruvate is formed at the N-terminus of the alpha chain, which is derived from the carboxyl end of the proenzyme. The autoendoproteolytic cleavage occurs by a canonical serine protease mechanism, in which the side chain hydroxyl group of the serine supplies its oxygen atom to form the C-terminus of the beta chain, while the remainder of the serine residue undergoes an oxidative deamination to produce ammonia and the pyruvoyl prosthetic group on the alpha chain. During this reaction, the Ser that is part of the protease active site of the proenzyme becomes the pyruvoyl prosthetic group, which constitutes an essential element of the active site of the mature decarboxylase.

Its subcellular location is the cell membrane. It carries out the reaction a 1,2-diacyl-sn-glycero-3-phospho-L-serine + H(+) = a 1,2-diacyl-sn-glycero-3-phosphoethanolamine + CO2. It participates in phospholipid metabolism; phosphatidylethanolamine biosynthesis; phosphatidylethanolamine from CDP-diacylglycerol: step 2/2. In terms of biological role, catalyzes the formation of phosphatidylethanolamine (PtdEtn) from phosphatidylserine (PtdSer). This Anaeromyxobacter sp. (strain K) protein is Phosphatidylserine decarboxylase proenzyme.